Reading from the N-terminus, the 400-residue chain is Centrosomal protein CEP57L1 (400 aa).

S45 bears the Phosphoserine mark. Coiled-coil stretches lie at residues 47-111 (NNQA…KKDI) and 138-213 (NVER…QDRA). Disordered stretches follow at residues 222 to 261 (REPP…EPVS) and 314 to 400 (MESK…KWEQ). Residues 244–258 (RTTSQARANPQSSGE) show a composition bias toward polar residues. Residues 261-345 (SICDSLSELL…EKIENSRINE (85 aa)) adopt a coiled-coil conformation. 2 stretches are compositionally biased toward basic and acidic residues: residues 314–342 (MESK…ENSR) and 391–400 (LRRDDIKWEQ).

It belongs to the translokin family.

The protein resides in the cytoplasm. The protein localises to the cytoskeleton. It localises to the microtubule organizing center. It is found in the centrosome. Functionally, centrosomal protein which may be required for microtubule attachment to centrosomes. In Mus musculus (Mouse), this protein is Centrosomal protein CEP57L1 (Cep57l1).